The primary structure comprises 406 residues: Protein IWS1 homolog 2 (406 aa).

Disordered regions lie at residues 1 to 28 and 41 to 89; these read MQEL…TGRR and DEVE…SEEV. A compositionally biased stretch (basic and acidic residues) spans 10–24; it reads EWVKELEGENEESKF. Residues 41–56 show a composition bias toward acidic residues; that stretch reads DEVEEDLDDFTEPADD. The span at 69-78 shows a compositional bias: basic and acidic residues; sequence KKDESGLEKT. The TFIIS N-terminal domain occupies 201–284; that stretch reads NLLKNWLEPL…NKWGRIIYNK (84 aa).

The protein belongs to the IWS1 family.

It is found in the nucleus. Its function is as follows. Transcription factor involved in RNA polymerase II (RNAPII) transcription regulation. Involved in transcription elongation. May function at post-recruitment and elongation steps of transcription. This chain is Protein IWS1 homolog 2, found in Arabidopsis thaliana (Mouse-ear cress).